We begin with the raw amino-acid sequence, 116 residues long: Dynein light chain Tctex-type 3 (116 aa).

Y4 is modified (3'-nitrotyrosine).

It belongs to the dynein light chain Tctex-type family. Homodimer. The cytoplasmic dynein 1 complex consists of two catalytic heavy chains (HCs) and a number of non-catalytic subunits presented by intermediate chains (ICs), light intermediate chains (LICs) and light chains (LCs); the composition seems to vary in respect to the IC, LIC and LC composition. The heavy chain homodimer serves as a scaffold for the probable homodimeric assembly of the respective non-catalytic subunits. The ICs and LICs bind directly to the HC dimer and the LCs assemble on the IC dimer. DYNLT1 and DYNLT3 compete for association with dynein IC (DYNC1I1 or DYNC1I2). Self-associates. Interacts with DYNC1I1 and DYNC1I2. Interacts with BUB3. Interacts with SATB1 in nucleus to form complex with matrix attachment regions (MARs) of DNA.

It is found in the nucleus. The protein resides in the cytoplasm. Its subcellular location is the cytoskeleton. The protein localises to the chromosome. It localises to the centromere. It is found in the kinetochore. In terms of biological role, acts as one of several non-catalytic accessory components of the cytoplasmic dynein 1 complex that are thought to be involved in linking dynein to cargos and to adapter proteins that regulate dynein function. Cytoplasmic dynein 1 acts as a motor for the intracellular retrograde motility of vesicles and organelles along microtubules. Probably binds BUB3 as part of transport cargo. Required for the efficient progression through mitosis. In Homo sapiens (Human), this protein is Dynein light chain Tctex-type 3 (DYNLT3).